Here is a 519-residue protein sequence, read N- to C-terminus: Exodeoxyribonuclease 7 large subunit (519 aa).

The tract at residues 493–519 (AISTGKSSNTNRKSAPAREPGKQGSLF) is disordered. The segment covering 496–505 (TGKSSNTNRK) has biased composition (polar residues).

It belongs to the XseA family. In terms of assembly, heterooligomer composed of large and small subunits.

The protein resides in the cytoplasm. It catalyses the reaction Exonucleolytic cleavage in either 5'- to 3'- or 3'- to 5'-direction to yield nucleoside 5'-phosphates.. Functionally, bidirectionally degrades single-stranded DNA into large acid-insoluble oligonucleotides, which are then degraded further into small acid-soluble oligonucleotides. The chain is Exodeoxyribonuclease 7 large subunit from Chelativorans sp. (strain BNC1).